The following is a 225-amino-acid chain: MENLKKLAGIKAAEFVQSGMIVGLGTGSTAYYFVEEIGRRIKEEGLQITAVTTSSVTSKQAEGLGIPLKSIDDVDQVDVTVDGADEVDSAFNGIKGGGGALLMEKVVAVPTKHYIWVVDESKMVEKLGAFKLPVEVVQYGAEQLFRRFERAGYKPAFREKDDQRFVTDMQNFIIDLDLGVIENSVEFAQELDHVVGVVEHGLFNQMVDKVIVAGKSGLQVLEANK.

Residues 26–29, 82–85, and 95–98 contribute to the substrate site; these read TGST, DGAD, and KGGG. The active-site Proton acceptor is the E104. K122 contributes to the substrate binding site.

The protein belongs to the ribose 5-phosphate isomerase family. Homodimer.

The catalysed reaction is aldehydo-D-ribose 5-phosphate = D-ribulose 5-phosphate. It functions in the pathway carbohydrate degradation; pentose phosphate pathway; D-ribose 5-phosphate from D-ribulose 5-phosphate (non-oxidative stage): step 1/1. In terms of biological role, catalyzes the reversible conversion of ribose-5-phosphate to ribulose 5-phosphate. This chain is Ribose-5-phosphate isomerase A, found in Streptococcus sanguinis (strain SK36).